The primary structure comprises 204 residues: MNFLNFSILIFAYLLGSINSAIIVCYIFRLPSPRSVGSGNPGTTNVLRIGGKVPAAITLIFDILKGLVPVVIAKVLTGNDFITACTALYAILGHIFPIFFGFKGGKGVATLIGTLFGFSWILGLIFVITWLCVAIITRYSSLSALVATVIASFSVIFTSDLQVAAPFLIIAIIILVKHKGNIQRLISGQESKIGDKAKAKNDSN.

Transmembrane regions (helical) follow at residues 8–28, 53–73, 81–101, 116–136, and 155–175; these read ILIF…CYIF, VPAA…VVIA, FITA…IFFG, FGFS…VAII, and VIFT…IIIL.

This sequence belongs to the PlsY family. In terms of assembly, probably interacts with PlsX.

It is found in the cell inner membrane. The catalysed reaction is an acyl phosphate + sn-glycerol 3-phosphate = a 1-acyl-sn-glycero-3-phosphate + phosphate. It functions in the pathway lipid metabolism; phospholipid metabolism. In terms of biological role, catalyzes the transfer of an acyl group from acyl-phosphate (acyl-PO(4)) to glycerol-3-phosphate (G3P) to form lysophosphatidic acid (LPA). This enzyme utilizes acyl-phosphate as fatty acyl donor, but not acyl-CoA or acyl-ACP. The chain is Glycerol-3-phosphate acyltransferase from Francisella tularensis subsp. holarctica (strain FTNF002-00 / FTA).